Reading from the N-terminus, the 51-residue chain is AMVTKNNGDLDKSGTECRLYCKDNSPGQNNSCKMFYSNEDEHKGMVLPGTK.

The 12-residue stretch at 1-12 (AMVTKNNGDLDK) folds into the Peptidase M12B domain. Residues 13–18 (SGTECR) enclose the Disintegrin domain. Residue Asn-29 is glycosylated (N-linked (GlcNAc...) asparagine).

The protein belongs to the venom metalloproteinase (M12B) family. P-III subfamily. P-IIIa sub-subfamily. In terms of assembly, monomer. Zn(2+) is required as a cofactor. In terms of tissue distribution, expressed by the venom gland.

The protein resides in the secreted. In terms of biological role, snake venom zinc metalloproteinase-disintegrin-like that blocks the interaction between platelets and collagen fibers through its binding to collagen fibers, resulting in the blockade of collagen-mediated platelet functions such as adhesion, release reaction, thromboxane formation, and aggregation. Binds selectively to collagen type I with high affinity. Also exerts proteolytic activity to matrix. The polypeptide is Zinc metalloproteinase-disintegrin-like crovidisin (Crotalus viridis viridis (Prairie rattlesnake)).